The following is a 450-amino-acid chain: Glutamate-1-semialdehyde 2,1-aminomutase (450 aa).

Lys262 carries the N6-(pyridoxal phosphate)lysine modification.

Belongs to the class-III pyridoxal-phosphate-dependent aminotransferase family. HemL subfamily. As to quaternary structure, homodimer. It depends on pyridoxal 5'-phosphate as a cofactor.

Its subcellular location is the cytoplasm. The catalysed reaction is (S)-4-amino-5-oxopentanoate = 5-aminolevulinate. The protein operates within porphyrin-containing compound metabolism; protoporphyrin-IX biosynthesis; 5-aminolevulinate from L-glutamyl-tRNA(Glu): step 2/2. This Campylobacter hominis (strain ATCC BAA-381 / DSM 21671 / CCUG 45161 / LMG 19568 / NCTC 13146 / CH001A) protein is Glutamate-1-semialdehyde 2,1-aminomutase.